Reading from the N-terminus, the 552-residue chain is Probable inorganic phosphate transporter 1-10 (552 aa).

Residues 1 to 22 are Cytoplasmic-facing; sequence MAPIGVLTALDQARTQYYHFKA. The helical transmembrane segment at 23-43 threads the bilayer; that stretch reads IVIAGMGLFTDSYDLFCIAPV. Residues 44–68 lie on the Extracellular side of the membrane; that stretch reads MKIVGRVYYSDGGARPGVTPPAVVS. The helical transmembrane segment at 69–89 threads the bilayer; it reads ATVGVALLGAVIGNVVFGALG. The Cytoplasmic portion of the chain corresponds to 90–96; it reads DRVGRRR. A helical membrane pass occupies residues 97 to 117; the sequence is VYGACLLLMVCSSVGSGFSVC. At 118–123 the chain is on the extracellular side; sequence RTRRCA. Residues 124 to 144 traverse the membrane as a helical segment; the sequence is LASLCFFRFLLGVGVGGDYPL. The Cytoplasmic portion of the chain corresponds to 145–158; that stretch reads SATIMSEFANRRTR. A helical transmembrane segment spans residues 159–179; it reads GAFIAAVFSMQGFGILASSAV. Topologically, residues 180 to 203 are extracellular; it reads TMAVAAAFDHYTGYPAPLDTPECA. Residues 204–224 form a helical membrane-spanning segment; it reads DLAWRIILMAGAVPAALTYYW. Topologically, residues 225 to 295 are cytoplasmic; that stretch reads RMSMPETARY…RRFVRQHGRD (71 aa). A helical membrane pass occupies residues 296–316; it reads LFACAAAWFLLDIPYYSSTLF. Residues 317 to 342 lie on the Extracellular side of the membrane; that stretch reads QSQIYRPLFPAPGLINAFQEAFNVAK. Residues 343 to 363 form a helical membrane-spanning segment; sequence FQAVIAVASTIPGYFVAVLLI. The Cytoplasmic portion of the chain corresponds to 364 to 369; the sequence is DRVGRR. A helical membrane pass occupies residues 370-390; the sequence is CLQMAGFLLMAVFLFALAGPY. Residues 391-397 lie on the Extracellular side of the membrane; it reads DGYWRDH. The helical transmembrane segment at 398–418 threads the bilayer; that stretch reads GAHAGYIVLYSLTFFSANLGP. The Cytoplasmic portion of the chain corresponds to 419-439; that stretch reads NTTTFILPAELFPARFRSTCH. The helical transmembrane segment at 440–460 threads the bilayer; it reads GLSGAAGKLGALVGSIGFLWA. The Extracellular portion of the chain corresponds to 461-473; that stretch reads SQQKDGAAAGHLP. The helical transmembrane segment at 474–494 threads the bilayer; sequence GIGMMYALFVLGGICLLGLAL. Over 495–552 the chain is Cytoplasmic; sequence TYVFTPETMMRSLEENESDRAQTQVGDGGSDTEAAKSPASMASSHLSMSPILPARVSV. The interval 507-540 is disordered; sequence LEENESDRAQTQVGDGGSDTEAAKSPASMASSHL.

This sequence belongs to the major facilitator superfamily. Phosphate:H(+) symporter (TC 2.A.1.9) family. Expressed at low levels in roots.

It localises to the membrane. Functionally, high-affinity transporter for external inorganic phosphate. The chain is Probable inorganic phosphate transporter 1-10 (PHT1-10) from Oryza sativa subsp. japonica (Rice).